Consider the following 321-residue polypeptide: Sex-lethal homolog (321 aa).

2 RRM domains span residues 78–156 and 164–244; these read TNLI…FARP and TNLY…VAEE.

In terms of tissue distribution, expressed in gonads and somatic tissues of both sexes. In the ovary, expressed in the last egg chamber of each ovariole. Highly expressed in nurse cells with low expression found in oocytes. Highly expressed in testis with lower expression in testis sheath and vas deferentia.

The protein localises to the nucleus. In terms of biological role, unknown; apparently not involved in somatic sex determination. In Megaselia scalaris (Humpbacked fly), this protein is Sex-lethal homolog (SXL).